We begin with the raw amino-acid sequence, 321 residues long: Major immediate early protein (321 aa).

The RING-type zinc finger occupies 86–139 (CSVCLETYSQQSNDTCPFLIPTTCDHGFCFKCVINLQSNAMNIPHSTVCCPLCN). The interval 228 to 249 (LIEENTRLNEQIQELQHQVRTL) is leucine-zipper.

It is found in the host nucleus. Functionally, plays some regulatory role in both viral DNA replication and transcriptional transactivation. The polypeptide is Major immediate early protein (PE38) (Lepidoptera (butterflies and moths)).